We begin with the raw amino-acid sequence, 1415 residues long: DNA-directed RNA polymerase subunit beta' (1415 aa).

Positions 72, 74, 87, and 90 each coordinate Zn(2+). Mg(2+) is bound by residues Asp-463, Asp-465, and Asp-467. Zn(2+)-binding residues include Cys-811, Cys-885, Cys-892, and Cys-895.

The protein belongs to the RNA polymerase beta' chain family. As to quaternary structure, the RNAP catalytic core consists of 2 alpha, 1 beta, 1 beta' and 1 omega subunit. When a sigma factor is associated with the core the holoenzyme is formed, which can initiate transcription. Mg(2+) is required as a cofactor. Zn(2+) serves as cofactor.

The enzyme catalyses RNA(n) + a ribonucleoside 5'-triphosphate = RNA(n+1) + diphosphate. Its function is as follows. DNA-dependent RNA polymerase catalyzes the transcription of DNA into RNA using the four ribonucleoside triphosphates as substrates. This is DNA-directed RNA polymerase subunit beta' from Cereibacter sphaeroides (strain ATCC 17029 / ATH 2.4.9) (Rhodobacter sphaeroides).